The following is a 237-amino-acid chain: NAD-dependent protein deacylase (237 aa).

Residues 1–235 (MRVVVLSGAG…PGLLQRLPAL (235 aa)) form the Deacetylase sirtuin-type domain. 8 to 28 (GAGISAESDVPTFRDDKNGLW) contributes to the NAD(+) binding site. 2 residues coordinate substrate: Tyr53 and Arg56. 86–89 (QNVD) lines the NAD(+) pocket. The active-site Proton acceptor is His104. Residues Cys112, Cys115, Cys138, and Cys140 each contribute to the Zn(2+) site. Residues 177 to 179 (GTS), 203 to 205 (NPE), and Ala221 contribute to the NAD(+) site.

This sequence belongs to the sirtuin family. Class III subfamily. Zn(2+) is required as a cofactor.

It localises to the cytoplasm. It catalyses the reaction N(6)-acetyl-L-lysyl-[protein] + NAD(+) + H2O = 2''-O-acetyl-ADP-D-ribose + nicotinamide + L-lysyl-[protein]. The enzyme catalyses N(6)-succinyl-L-lysyl-[protein] + NAD(+) + H2O = 2''-O-succinyl-ADP-D-ribose + nicotinamide + L-lysyl-[protein]. In terms of biological role, NAD-dependent lysine deacetylase and desuccinylase that specifically removes acetyl and succinyl groups on target proteins. Modulates the activities of several proteins which are inactive in their acylated form. The protein is NAD-dependent protein deacylase of Mycobacterium leprae (strain TN).